Here is a 633-residue protein sequence, read N- to C-terminus: Chaperone protein DnaK (633 aa).

Phosphothreonine; by autocatalysis is present on Thr-196. The interval 594–633 (NLYGQPGAEPQPETNGHAGGSKGGDGAVNAEYEVIDGDDK) is disordered. A compositionally biased stretch (gly residues) spans 610-619 (HAGGSKGGDG).

The protein belongs to the heat shock protein 70 family.

In terms of biological role, acts as a chaperone. This is Chaperone protein DnaK from Chlorobaculum tepidum (strain ATCC 49652 / DSM 12025 / NBRC 103806 / TLS) (Chlorobium tepidum).